Here is a 148-residue protein sequence, read N- to C-terminus: Succinate dehydrogenase assembly factor 3, mitochondrial (148 aa).

The N-terminal 12 residues, 1–12, are a transit peptide targeting the mitochondrion; sequence MYALRPTLRRSA. The disordered stretch occupies residues 129–148; the sequence is RGTEGDLEDGDGGESGQKSQ.

The protein belongs to the complex I LYR family. SDHAF3 subfamily. As to quaternary structure, interacts with the iron-sulfur protein subunit within the SDH catalytic dimer.

The protein localises to the mitochondrion matrix. Plays an essential role in the assembly of succinate dehydrogenase (SDH), an enzyme complex (also referred to as respiratory complex II) that is a component of both the tricarboxylic acid (TCA) cycle and the mitochondrial electron transport chain, and which couples the oxidation of succinate to fumarate with the reduction of ubiquinone (coenzyme Q) to ubiquinol. Promotes maturation of the iron-sulfur protein subunit of the SDH catalytic dimer, protecting it from the deleterious effects of oxidants. May act together with SDHAF1. This chain is Succinate dehydrogenase assembly factor 3, mitochondrial, found in Neurospora crassa (strain ATCC 24698 / 74-OR23-1A / CBS 708.71 / DSM 1257 / FGSC 987).